The chain runs to 236 residues: 2,3,4,5-tetrahydropyridine-2,6-dicarboxylate N-acetyltransferase (236 aa).

The protein belongs to the transferase hexapeptide repeat family. DapH subfamily.

It catalyses the reaction (S)-2,3,4,5-tetrahydrodipicolinate + acetyl-CoA + H2O = L-2-acetamido-6-oxoheptanedioate + CoA. It participates in amino-acid biosynthesis; L-lysine biosynthesis via DAP pathway; LL-2,6-diaminopimelate from (S)-tetrahydrodipicolinate (acetylase route): step 1/3. Catalyzes the transfer of an acetyl group from acetyl-CoA to tetrahydrodipicolinate. The protein is 2,3,4,5-tetrahydropyridine-2,6-dicarboxylate N-acetyltransferase of Oceanobacillus iheyensis (strain DSM 14371 / CIP 107618 / JCM 11309 / KCTC 3954 / HTE831).